A 124-amino-acid polypeptide reads, in one-letter code: MNNLLLVALGGSIGAVFRYLISIFMIQVFGSSFPFGTLLVNVLGSFLMGVIYALGQMSHISPEFKALIGIGLLGALTTFSTFSNETLLLLQEGDWLKATLNVVLNLSLCLFMVYLGQQLVFSRI.

Transmembrane regions (helical) follow at residues 4-24 (LLLV…ISIF), 35-55 (FGTL…YALG), 60-80 (ISPE…TTFS), and 102-122 (VVLN…LVFS). Residues glycine 74 and threonine 77 each coordinate Na(+).

Belongs to the fluoride channel Fluc/FEX (TC 1.A.43) family.

The protein localises to the cell inner membrane. It catalyses the reaction fluoride(in) = fluoride(out). With respect to regulation, na(+) is not transported, but it plays an essential structural role and its presence is essential for fluoride channel function. Fluoride-specific ion channel. Important for reducing fluoride concentration in the cell, thus reducing its toxicity. This Shewanella baltica (strain OS223) protein is Fluoride-specific ion channel FluC.